A 344-amino-acid polypeptide reads, in one-letter code: Nicotinate-nucleotide--dimethylbenzimidazole phosphoribosyltransferase (344 aa).

Catalysis depends on glutamate 310, which acts as the Proton acceptor.

It belongs to the CobT family.

The enzyme catalyses 5,6-dimethylbenzimidazole + nicotinate beta-D-ribonucleotide = alpha-ribazole 5'-phosphate + nicotinate + H(+). It functions in the pathway nucleoside biosynthesis; alpha-ribazole biosynthesis; alpha-ribazole from 5,6-dimethylbenzimidazole: step 1/2. Its function is as follows. Catalyzes the synthesis of alpha-ribazole-5'-phosphate from nicotinate mononucleotide (NAMN) and 5,6-dimethylbenzimidazole (DMB). The protein is Nicotinate-nucleotide--dimethylbenzimidazole phosphoribosyltransferase of Chromobacterium violaceum (strain ATCC 12472 / DSM 30191 / JCM 1249 / CCUG 213 / NBRC 12614 / NCIMB 9131 / NCTC 9757 / MK).